Consider the following 287-residue polypeptide: ATP synthase gamma chain (287 aa).

Belongs to the ATPase gamma chain family. In terms of assembly, F-type ATPases have 2 components, CF(1) - the catalytic core - and CF(0) - the membrane proton channel. CF(1) has five subunits: alpha(3), beta(3), gamma(1), delta(1), epsilon(1). CF(0) has three main subunits: a, b and c.

Its subcellular location is the cell inner membrane. Its function is as follows. Produces ATP from ADP in the presence of a proton gradient across the membrane. The gamma chain is believed to be important in regulating ATPase activity and the flow of protons through the CF(0) complex. This is ATP synthase gamma chain from Serratia proteamaculans (strain 568).